The following is a 598-amino-acid chain: Transcription factor COE3 (598 aa).

Residues 1–23 (MFGIQENIPRGGTTMKEEPLGGG) form a disordered region. Residues 63–66 (RKSN) are interaction with DNA. The C5-type zinc finger occupies 151–170 (CRVLLTHEIMCSRCCDKKSC). Interaction with DNA regions lie at residues 197-204 (NCLKNAGN) and 236-239 (NNSK). An IPT/TIG domain is found at 264–347 (PCIKAISPSE…KGAPGRFVYT (84 aa)). The segment at 452-483 (TSQANDQVGYSRNTSSVSPRGYVPSSTPQQSN) is disordered.

Belongs to the COE family. As to quaternary structure, forms either a homodimer or a heterodimer with a related family member.

It is found in the nucleus. Functionally, acts as a transcriptional activator. The polypeptide is Transcription factor COE3 (coe3) (Xenopus laevis (African clawed frog)).